The sequence spans 156 residues: uncharacterized protein (156 aa).

The first 18 residues, 1-18, serve as a signal peptide directing secretion; it reads MKKLLSIFLMAFSLNAFA. One can recognise a Thioredoxin domain in the interval 19–156; it reads QTNLADVQLK…AEQIRVFAEK (138 aa). The cysteines at positions 54 and 57 are disulfide-linked.

Belongs to the thioredoxin family.

This is an uncharacterized protein from Haemophilus influenzae (strain ATCC 51907 / DSM 11121 / KW20 / Rd).